The chain runs to 657 residues: Oleate activated transcription factor 3 (657 aa).

A DNA-binding region (zn(2)-C6 fungal-type) is located at residues 21-48; the sequence is CLNCRRRKTKCDRGKPSCSNCLKLGETC.

This sequence belongs to the OAF3 family.

Its subcellular location is the cytoplasm. The protein resides in the nucleus. It localises to the mitochondrion. Functionally, transcriptional inhibitor with a significantly increased number of target genes in response to oleate. The polypeptide is Oleate activated transcription factor 3 (OAF3) (Kluyveromyces lactis (strain ATCC 8585 / CBS 2359 / DSM 70799 / NBRC 1267 / NRRL Y-1140 / WM37) (Yeast)).